Reading from the N-terminus, the 424-residue chain is MAKIVVTGGQALHGEVNISGAKNAVLPILCATLLADAPVEISNVPHLHDVITTVKLLSELGAEVTIDEGTLAKGRSILVDPRSVTHQVAPYELVKTMRASILVLGPLLARYGTAEVSLPGGCAIGSRPVDQHIKGLQALGADISVENGYIKATSHGRLKGGRYVFDMVSVTGTENVLMAAVLAEGTTVLENAAMEPEVTDLADCLIALGAQIEGAGTPRIVVQGVERLGGGHHAVLPDRIETGTFLVAAAMTGGSVTVRRARPETLDAVLDKLTEAGATITTTADSITLDMQGKRPRAVSLTTAPYPAFPTDMQAQFMALNCVADGVGVINETIFENRFMHVNELLRLGADIQVEGHTAIVRGAERLSGAPVMATDLRASASLILAGLVADGDTTIDRIYHLDRGYENIEEKLGALGATIQRTA.

22-23 is a phosphoenolpyruvate binding site; that stretch reads KN. Arginine 98 contacts UDP-N-acetyl-alpha-D-glucosamine. Cysteine 122 (proton donor) is an active-site residue. Cysteine 122 carries the 2-(S-cysteinyl)pyruvic acid O-phosphothioketal modification. UDP-N-acetyl-alpha-D-glucosamine is bound by residues 127–131, aspartate 312, and isoleucine 334; that span reads RPVDQ.

Belongs to the EPSP synthase family. MurA subfamily.

It localises to the cytoplasm. It carries out the reaction phosphoenolpyruvate + UDP-N-acetyl-alpha-D-glucosamine = UDP-N-acetyl-3-O-(1-carboxyvinyl)-alpha-D-glucosamine + phosphate. It participates in cell wall biogenesis; peptidoglycan biosynthesis. Its function is as follows. Cell wall formation. Adds enolpyruvyl to UDP-N-acetylglucosamine. In Xanthomonas euvesicatoria pv. vesicatoria (strain 85-10) (Xanthomonas campestris pv. vesicatoria), this protein is UDP-N-acetylglucosamine 1-carboxyvinyltransferase.